We begin with the raw amino-acid sequence, 393 residues long: NAD(P)H-quinone oxidoreductase subunit H, chloroplastic (393 aa).

This sequence belongs to the complex I 49 kDa subunit family. NDH is composed of at least 16 different subunits, 5 of which are encoded in the nucleus.

The protein resides in the plastid. Its subcellular location is the chloroplast thylakoid membrane. It catalyses the reaction a plastoquinone + NADH + (n+1) H(+)(in) = a plastoquinol + NAD(+) + n H(+)(out). It carries out the reaction a plastoquinone + NADPH + (n+1) H(+)(in) = a plastoquinol + NADP(+) + n H(+)(out). In terms of biological role, NDH shuttles electrons from NAD(P)H:plastoquinone, via FMN and iron-sulfur (Fe-S) centers, to quinones in the photosynthetic chain and possibly in a chloroplast respiratory chain. The immediate electron acceptor for the enzyme in this species is believed to be plastoquinone. Couples the redox reaction to proton translocation, and thus conserves the redox energy in a proton gradient. The polypeptide is NAD(P)H-quinone oxidoreductase subunit H, chloroplastic (Calycanthus floridus var. glaucus (Eastern sweetshrub)).